The chain runs to 119 residues: Large ribosomal subunit protein bL19 (119 aa).

The protein belongs to the bacterial ribosomal protein bL19 family.

Functionally, this protein is located at the 30S-50S ribosomal subunit interface and may play a role in the structure and function of the aminoacyl-tRNA binding site. The chain is Large ribosomal subunit protein bL19 (rplS) from Mycoplasma genitalium (strain ATCC 33530 / DSM 19775 / NCTC 10195 / G37) (Mycoplasmoides genitalium).